Consider the following 591-residue polypeptide: Alternative cytochrome c oxidase subunit 1 (591 aa).

Residues 40-60 (VIAIQYSLTASAIGLVALVLS) traverse the membrane as a helical segment. His-88 contacts heme b. The next 11 helical transmembrane spans lie at 90 to 110 (MIMV…NYLI), 126 to 146 (MLSY…FFVP), 172 to 192 (GIVL…MGGL), 215 to 235 (VWGI…LFVG), 274 to 294 (LFWF…FGIV), 313 to 333 (VWAI…HMYV), 337 to 357 (YPYF…PTAI), 377 to 397 (MLFA…GLFL), 412 to 432 (VVAH…LGAI), 453 to 473 (FWVT…LGLL), and 498 to 518 (FITV…FNLV). Cu cation is bound by residues His-280, Tyr-284, His-329, and His-330. The segment at residues 280 to 284 (HPEVY) is a cross-link (1'-histidyl-3'-tyrosine (His-Tyr)). Positions 415 and 417 each coordinate heme b.

It belongs to the heme-copper respiratory oxidase family. In terms of assembly, this alternate cytochrome c oxidase consists of a subunit I and two cytochromes c. Equivalents to subunit 2 and 3 are not present in this complex.

It localises to the cell membrane. It catalyses the reaction 4 Fe(II)-[cytochrome c] + O2 + 8 H(+)(in) = 4 Fe(III)-[cytochrome c] + 2 H2O + 4 H(+)(out). Its function is as follows. Cytochrome c oxidase is the component of the respiratory chain that catalyzes the reduction of oxygen to water. Subunits 1-3 form the functional core of the enzyme complex. Co I is the catalytic subunit of the enzyme. Electrons originating in cytochrome c are transferred via the copper A center of subunit 2 and a low-spin heme of subunit 1 to the bimetallic center formed by a high-spin heme and copper B. This chain is Alternative cytochrome c oxidase subunit 1 (coxN), found in Bradyrhizobium diazoefficiens (strain JCM 10833 / BCRC 13528 / IAM 13628 / NBRC 14792 / USDA 110).